The following is a 398-amino-acid chain: Nematocin receptor 2 (398 aa).

At 1-25 (MNNNTLNITNQRTAAAMSQIYFLVV) the chain is on the extracellular side. 2 N-linked (GlcNAc...) asparagine glycosylation sites follow: asparagine 3 and asparagine 7. A helical transmembrane segment spans residues 26–46 (YQTAVMIVSLLGNLFLLFVIF). Topologically, residues 47 to 58 (RANQVMKRRVSP) are cytoplasmic. Residues 59–79 (VQLLIIHTCVADLLFALLSLG) traverse the membrane as a helical segment. The Extracellular segment spans residues 80-99 (TEILTLRTYPQYYGSNFVCK). A disulfide bridge connects residues cysteine 98 and cysteine 173. Residues 100-120 (LMRYVQMFPMYASPFLLVAIS) form a helical membrane-spanning segment. The Cytoplasmic portion of the chain corresponds to 121–143 (ADRYQAICRPLAHFRSSRYRRPN). A helical transmembrane segment spans residues 144–164 (WMAAIAWGLALVLSIPQFFVW). Residues 165–187 (TKHSKTGRCSTIYGQNKNTVKIT) lie on the Extracellular side of the membrane. Residues 188–208 (YVIMFNTLAWLLPSILAAVFY) traverse the membrane as a helical segment. Residues 209 to 271 (YCVCKAVRLS…DRKRVQTVRL (63 aa)) lie on the Cytoplasmic side of the membrane. A helical transmembrane segment spans residues 272-292 (TITIVACNFFLWMPFCLINVI). The Extracellular portion of the chain corresponds to 293-302 (QALWPEISHI). The chain crosses the membrane as a helical span at residues 303-325 (MFINYVAILGNLNSCLNPWIYIL). Residues 326-398 (FNRSHVRKAL…DSTSLKTNSN (73 aa)) lie on the Cytoplasmic side of the membrane.

Belongs to the G-protein coupled receptor 1 family. Vasopressin/oxytocin receptor subfamily. In terms of tissue distribution, detected in the ADL sensory neurons, the RMED and RMEV motor neurons, and the PQR tail neuron. In males, detected in SPC tail neurons involved in spicule penetration and sperm transfer, and male-specific oblique muscles involved in vulval contact.

The protein resides in the cell membrane. Its function is as follows. Not directly activated by nematocin. May modulate activity of the nematocin receptor ntr-1, leading to reduced intracellular cAMP production. Plays a role in male mating behavior. This Caenorhabditis elegans protein is Nematocin receptor 2.